A 652-amino-acid chain; its full sequence is ATP-binding cassette sub-family G member 5 (652 aa).

The segment at 1–30 (MSELPFLSPEGARGPHNNRGSQSSLEEGSV) is disordered. The Cytoplasmic segment spans residues 1–384 (MSELPFLSPE…RVTRNLMRNK (384 aa)). Positions 18 to 30 (NRGSQSSLEEGSV) are enriched in polar residues. Positions 39-294 (LGVLNVSFSV…FNNCGYPCPE (256 aa)) constitute an ABC transporter domain. An ATP-binding site is contributed by 87-94 (GSSGSGKT). Residues 385–405 (QVVIMRLVQNLIMGLFLIFYL) traverse the membrane as a helical segment. In terms of domain architecture, ABC transmembrane type-2 spans 389 to 646 (MRLVQNLIMG…ILGMVVFKVR (258 aa)). Residues 406-422 (LRVQNNMLKGAVQDRVG) lie on the Extracellular side of the membrane. Residues 423-443 (LLYQLVGATPYTGMLNAVNLF) form a helical membrane-spanning segment. The Cytoplasmic segment spans residues 444–468 (PMLRAVSDQESQDGLYQKWQMLLAY). A helical membrane pass occupies residues 469–490 (VLHALPFSIVATVIFSSVCYWT). At 491–501 (LGLYPEVARFG) the chain is on the extracellular side. A helical membrane pass occupies residues 502 to 522 (YFSAALLAPHLIGEFLTLVLL). The Cytoplasmic segment spans residues 523–529 (GMVQNPN). A helical membrane pass occupies residues 530 to 550 (IVNSIVALLSISGLLIGSGFI). Residues 551–624 (RNIEEMPIPL…PGATSRFTTN (74 aa)) are Extracellular-facing. Asn-585 and Asn-592 each carry an N-linked (GlcNAc...) asparagine glycan. The chain crosses the membrane as a helical span at residues 625–645 (FLILYSFIPTLVILGMVVFKV). Residues 646-652 (RDYLISR) lie on the Cytoplasmic side of the membrane.

The protein belongs to the ABC transporter superfamily. ABCG family. Eye pigment precursor importer (TC 3.A.1.204) subfamily. In terms of assembly, heterodimer with ABCG8. Mg(2+) is required as a cofactor. Post-translationally, N-glycosylated. N-glycosylation is important for efficient export out of the endoplasmic reticulum. Detected in liver (at protein level). Expressed only in liver and intestine.

Its subcellular location is the cell membrane. It localises to the apical cell membrane. The enzyme catalyses cholesterol(in) + ATP + H2O = cholesterol(out) + ADP + phosphate + H(+). The catalysed reaction is sitosterol(in) + ATP + H2O = sitosterol(out) + ADP + phosphate + H(+). ABCG5 and ABCG8 form an obligate heterodimer that mediates Mg(2+)- and ATP-dependent sterol transport across the cell membrane. Plays an essential role in the selective transport of dietary plant sterols and cholesterol in and out of the enterocytes and in the selective sterol excretion by the liver into bile. Required for normal sterol homeostasis. The heterodimer with ABCG8 has ATPase activity. The sequence is that of ATP-binding cassette sub-family G member 5 from Rattus norvegicus (Rat).